A 202-amino-acid chain; its full sequence is MKPFVGLLGLLLLLSFMKTCADDWTAISLQCADHWFHLRIRPTIFHNIFMEPDEVFLGIGCPVTTTWPNDTYEFIYRTYSCGIANKVLCDVTLLKTQLTYISKNASLQAEMSLSCVMHNQSPHFCEAESRGDFTGDPPGWTEDMRARRDEQTVPMVQPNLSTSSEDHHVSTEPWASETSRSEAAEVPSFMDQNFSVFHFSRM.

The signal sequence occupies residues 1–21; it reads MKPFVGLLGLLLLLSFMKTCA. Residues 157 to 183 form a disordered region; sequence QPNLSTSSEDHHVSTEPWASETSRSEA.

The protein belongs to the PLAC1 family. As to expression, expressed in oocytes in primary through antral-stage follicles. Expressed in liver and ovary.

Its subcellular location is the secreted. Its function is as follows. May be involved in cell differentiation. The protein is Oocyte-secreted protein 1 (Oosp1) of Mus musculus (Mouse).